Consider the following 206-residue polypeptide: Venom allergen 5 (206 aa).

Disulfide bonds link Cys-5–Cys-18, Cys-9–Cys-103, Cys-28–Cys-96, and Cys-172–Cys-189. In terms of domain architecture, SCP spans 47-191 (LKVHNDFRQK…WYTHYLVCNY (145 aa)).

The protein belongs to the CRISP family. Venom allergen 5-like subfamily. In terms of tissue distribution, expressed by the venom gland.

It localises to the secreted. This chain is Venom allergen 5, found in Vespula vidua (Ground hornet).